The following is a 21-amino-acid chain: Cutinase 2 (21 aa).

The protein belongs to the cutinase family.

It is found in the secreted. The catalysed reaction is cutin + H2O = cutin monomers.. With respect to regulation, inhibited by diisopropyl fluorophosphate (DFP). In terms of biological role, catalyzes the hydrolysis of complex carboxylic polyesters found in the cell wall of plants. Degrades cutin, a macromolecule that forms the structure of the plant cuticle. Allows pathogenic fungi to penetrate through the cuticular barrier into the host plant during the initial stage of fungal infection. In Colletotrichum gloeosporioides (Anthracnose fungus), this protein is Cutinase 2.